A 135-amino-acid polypeptide reads, in one-letter code: Large ribosomal subunit protein bL19 (135 aa).

The protein belongs to the bacterial ribosomal protein bL19 family.

Its function is as follows. This protein is located at the 30S-50S ribosomal subunit interface and may play a role in the structure and function of the aminoacyl-tRNA binding site. The protein is Large ribosomal subunit protein bL19 of Xanthomonas campestris pv. campestris (strain 8004).